The following is a 240-amino-acid chain: Phosphoribosylaminoimidazole-succinocarboxamide synthase (240 aa).

It belongs to the SAICAR synthetase family.

The enzyme catalyses 5-amino-1-(5-phospho-D-ribosyl)imidazole-4-carboxylate + L-aspartate + ATP = (2S)-2-[5-amino-1-(5-phospho-beta-D-ribosyl)imidazole-4-carboxamido]succinate + ADP + phosphate + 2 H(+). It participates in purine metabolism; IMP biosynthesis via de novo pathway; 5-amino-1-(5-phospho-D-ribosyl)imidazole-4-carboxamide from 5-amino-1-(5-phospho-D-ribosyl)imidazole-4-carboxylate: step 1/2. This is Phosphoribosylaminoimidazole-succinocarboxamide synthase from Wolbachia sp. subsp. Drosophila simulans (strain wRi).